The chain runs to 336 residues: Dihydroorotate dehydrogenase (quinone) (336 aa).

FMN is bound by residues 62-66 (AGLDK) and threonine 86. Lysine 66 contributes to the substrate binding site. Residue 111 to 115 (NRMGF) coordinates substrate. FMN-binding residues include asparagine 139 and asparagine 172. Substrate is bound at residue asparagine 172. Serine 175 (nucleophile) is an active-site residue. Substrate is bound at residue asparagine 177. Positions 217 and 245 each coordinate FMN. Position 246 to 247 (246 to 247 (NT)) interacts with substrate. FMN is bound by residues glycine 268, glycine 297, and 318–319 (YS).

It belongs to the dihydroorotate dehydrogenase family. Type 2 subfamily. Monomer. The cofactor is FMN.

It is found in the cell membrane. It catalyses the reaction (S)-dihydroorotate + a quinone = orotate + a quinol. It functions in the pathway pyrimidine metabolism; UMP biosynthesis via de novo pathway; orotate from (S)-dihydroorotate (quinone route): step 1/1. Its function is as follows. Catalyzes the conversion of dihydroorotate to orotate with quinone as electron acceptor. The chain is Dihydroorotate dehydrogenase (quinone) from Yersinia pseudotuberculosis serotype O:1b (strain IP 31758).